Reading from the N-terminus, the 1216-residue chain is Metabotropic glycine receptor (1216 aa).

The signal sequence occupies residues 1-23 (MGVMAYPFLFCLLLVHFGLGAIG). Residues 24-417 (ASREAPSRPD…CFVQEDKYLR (394 aa)) lie on the Extracellular side of the membrane. Residues 25 to 65 (SREAPSRPDPPRERTLRAKQHAQQPARASASDPSAPWSRST) are disordered. Positions 28-40 (APSRPDPPRERTL) are enriched in basic and acidic residues. Residues 46-64 (AQQPARASASDPSAPWSRS) show a composition bias toward low complexity. The interval 85 to 281 (YLYTGDSHKL…CENGSYKPGW (197 aa)) is cache-like region. Residues Asn98 and Asn143 are each glycosylated (N-linked (GlcNAc...) asparagine). A disulfide bridge links Cys99 with Cys272. 2 residues coordinate glycine: Ser172 and Arg173. N-linked (GlcNAc...) asparagine glycosylation is present at Asn215. Glu271 contributes to the glycine binding site. N-linked (GlcNAc...) asparagine glycosylation occurs at Asn274. Asp307 is a binding site for glycine. A glycan (N-linked (GlcNAc...) asparagine) is linked at Asn333. The helical transmembrane segment at 418 to 439 (LAIISFQALCMLLDFLSMLVVY) threads the bilayer. Over 440–451 (RFRKAKSIRASG) the chain is Cytoplasmic. A helical membrane pass occupies residues 452 to 474 (LILLETILFGSLLLYFPVVILYF). The Extracellular portion of the chain corresponds to 475 to 478 (EPST). A helical membrane pass occupies residues 479-501 (FRCILLRWVRLLGFATVYGTVTL). A disulfide bridge links Cys481 with Cys573. Topologically, residues 502-525 (KLHRVLKVFLSRTAQRIPYMTGGR) are cytoplasmic. The chain crosses the membrane as a helical span at residues 526-547 (VMRMLAVILLVVFWFLVGWTSS). The Extracellular portion of the chain corresponds to 548–576 (VCQNLERHISLIGQGRTSDHLIFSMCLVE). The helical transmembrane segment at 577–597 (RWDYMTAAAEFLFLLWGVYLC) threads the bilayer. The Cytoplasmic portion of the chain corresponds to 598–611 (YAVRTVPSAFHEPR). Residues 612–633 (YMAVAVHNELIISAIFHTIRFV) form a helical membrane-spanning segment. Topologically, residues 634 to 642 (LASRLQSDW) are extracellular. Residues 643–664 (MLMLYFAHTHLTVTVTIGLLLI) traverse the membrane as a helical segment. Topologically, residues 665–1216 (PKFSHSSNNP…NEEVRLARKV (552 aa)) are cytoplasmic. A phosphoserine mark is found at Ser694, Ser705, and Ser708. Disordered stretches follow at residues 757–875 (RITE…ESVP) and 911–1000 (KEKT…HMKD). A compositionally biased stretch (basic and acidic residues) spans 769 to 781 (CSKEDKDGGEHGS). Residue Lys774 forms a Glycyl lysine isopeptide (Lys-Gly) (interchain with G-Cter in ubiquitin) linkage. A compositionally biased stretch (polar residues) spans 864 to 873 (EDSQAVSTES). The residue at position 866 (Ser866) is a Phosphoserine. Over residues 926 to 944 (VEERAKAQKALPRERETNR) the composition is skewed to basic and acidic residues. Composition is skewed to polar residues over residues 945 to 963 (KYSN…PNSS) and 980 to 991 (QRANPTTANSDL). A Phosphoserine modification is found at Ser947. Residues 1007 to 1011 (VCPWE) carry the VCPWE motif 1 motif. The interval 1038-1072 (ERNPTFSLKEKSHPKPKAADLCQQSNPKSVDKAEV) is disordered. Ser1066 carries the phosphoserine modification. Positions 1072–1076 (VCPWE) match the VCPWE motif 2 motif. Phosphoserine is present on Ser1081. Residues 1128–1167 (SKVENENLNQLGEQEKKTSSSERNVPDSHNSSNNFQPPLM) are disordered. Residues 1140–1153 (EQEKKTSSSERNVP) are compositionally biased toward basic and acidic residues. Residues 1154 to 1163 (DSHNSSNNFQ) show a composition bias toward polar residues. Residues 1172–1176 (VCPWE) carry the VCPWE motif 3 motif.

Belongs to the G-protein coupled receptor 3 family. In terms of assembly, homodimer. Associates with the RGS7-GNB5 complex, promoting its localization to the cell membrane and regulating its GTPase activator activity. Interacts (via VCPWE motifs) with GNAO1. Interacts with GPC4. Interacts with EGFLAM.

The protein resides in the cell membrane. It localises to the postsynaptic cell membrane. Its subcellular location is the presynaptic cell membrane. The protein localises to the nucleus. Functionally, metabotropic receptor for glycine that controls synapse formation and function in the brain. Acts as an atypical G-protein coupled receptor that recruits and regulates the RGS7-GNB5 complex instead of activating G proteins. In absence of glycine ligand, promotes the GTPase activator activity of RGS7, increasing the GTPase activity of G protein alpha subunits, thereby driving them into their inactive GDP-bound form. Glycine-binding changes the conformation of the intracellular surface, inhibiting the GTPase activator activity of the RGS7-GNB5 complex, promoting G protein alpha subunits into their active GTP-bound form and regulating cAMP levels. Also able to bind taurine, a compound closely related to glycine, but with a two-fold lower affinity. Glycine receptor-dependent regulation of cAMP controls key ion channels, kinases and neurotrophic factors involved in neuronal excitability and synaptic transmission. Plays a pivotal role in regulating mood and cognition via its ability to regulate neuronal excitability in L2/L3 pyramidal neurons of the prefrontal cortex. Also involved in spatial learning by regulating hippocampal CA1 neuronal excitability. Acts as a synaptic organizer in the hippocampus, required for proper mossy fiber-CA3 neurocircuitry establishment, structure and function: induces presynaptic differentiation in contacting axons via its interaction with GPC4. In addition to glycine, may also act as a receptor for osteocalcin (BGLAP) hormone: osteocalcin-binding initiates a signaling response that prevents neuronal apoptosis in the hippocampus and regulates the synthesis of neurotransmitters. The sequence is that of Metabotropic glycine receptor (GPR158) from Bos taurus (Bovine).